A 699-amino-acid chain; its full sequence is Triacylglycerol hydrolase DDHD2 (699 aa).

Residues 1-11 are compositionally biased toward polar residues; that stretch reads MSSGESHQEQL. Residues 1 to 25 are disordered; that stretch reads MSSGESHQEQLSQSDPSPSPNSCSS. Over residues 12 to 25 the composition is skewed to low complexity; the sequence is SQSDPSPSPNSCSS. Residues 30–112 form the WWE domain; it reads DMDASSSYEP…WDELPSEVRR (83 aa). The Nucleophile role is filled by serine 351. The 63-residue stretch at 383–445 folds into the SAM domain; the sequence is DRGDASTLEE…KILNHFSARK (63 aa). Serine 447 carries the post-translational modification Phosphoserine. Residues 484-688 form the DDHD domain; sequence LNYKPEIFFA…VLLVLKEIYQ (205 aa). The segment at 599–635 is disordered; that stretch reads QASETAEETEAEPESSSEKSNEANTEEPPVEVKEEAP. Over residues 603–613 the composition is skewed to acidic residues; sequence TAEETEAEPES.

This sequence belongs to the PA-PLA1 family. Forms homooligomers and, to a much smaller extent, heterooligomers with DDHD1.

The protein resides in the cytoplasm. Its subcellular location is the cytosol. The protein localises to the endoplasmic reticulum-Golgi intermediate compartment. It localises to the golgi apparatus. It is found in the cis-Golgi network. It carries out the reaction a triacylglycerol + H2O = a diacylglycerol + a fatty acid + H(+). The enzyme catalyses a diacylglycerol + H2O = a monoacylglycerol + a fatty acid + H(+). It catalyses the reaction a 1,3-diacylglycerol + H2O = a 1-acylglycerol + a fatty acid + H(+). The catalysed reaction is a 1-acylglycerol + H2O = glycerol + a fatty acid + H(+). It carries out the reaction 1,2,3-tri-(9Z-octadecenoyl)-glycerol + H2O = di-(9Z)-octadecenoylglycerol + (9Z)-octadecenoate + H(+). The enzyme catalyses di-(9Z)-octadecenoylglycerol + H2O = (9Z-octadecenoyl)-glycerol + (9Z)-octadecenoate + H(+). It catalyses the reaction 1,3-di-(9Z-octadecenoyl)-glycerol + H2O = 1-(9Z-octadecenoyl)-glycerol + (9Z)-octadecenoate + H(+). The catalysed reaction is trihexadecanoylglycerol + H2O = dihexadecanoylglycerol + hexadecanoate + H(+). It carries out the reaction 1,2-di-(9Z-octadecenoyl)-sn-glycero-3-phosphocholine + H2O = (9Z-octadecenoyl)-sn-glycero-3-phosphocholine + (9Z)-octadecenoate + H(+). The enzyme catalyses 1-(9Z-octadecenoyl)-glycerol + H2O = glycerol + (9Z)-octadecenoate + H(+). It catalyses the reaction 1,2-di-(9Z-octadecenoyl)-sn-glycero-3-phosphate + H2O = 2-(9Z-octadecenoyl)-sn-glycero-3-phosphate + (9Z)-octadecenoate + H(+). The catalysed reaction is 1-hexadecanoyl-2-(9Z-octadecenoyl)-sn-glycero-3-phosphate + H2O = 2-(9Z-octadecenoyl)-sn-glycero-3-phosphate + hexadecanoate + H(+). It carries out the reaction 1-hexadecanoyl-2-(9Z-octadecenoyl)-sn-glycero-3-phosphoethanolamine + H2O = 2-(9Z-octadecenoyl)-sn-glycero-3-phosphoethanolamine + hexadecanoate + H(+). The enzyme catalyses 1-hexadecanoyl-2-(9Z-octadecenoyl)-sn-glycero-3-phospho-L-serine + H2O = 2-(9Z-octadecenoyl)-sn-glycero-3-phospho-L-serine + hexadecanoate + H(+). It catalyses the reaction 1-hexadecanoyl-2-(9Z-octadecenoyl)-sn-glycero-3-phosphocholine + H2O = 2-(9Z-octadecenoyl)-sn-glycero-3-phosphocholine + hexadecanoate + H(+). Its function is as follows. Diacylglycerol (DAG) and triacylglycerol (TAG) lipase that is required for proper lipid homeostasis in the central nervous system. It cooperates with PNPLA2/ATGL in neuronal TAG catabolism and hydrolyzes sn-1,3-DAG downstream of PNPLA2/ATGL. In vitro, also acts as a phospholipase that hydrolyzes preferentially phosphatidic acids, including 1,2-dioleoyl-sn-phosphatidic acid, phosphatidylcholine and phosphatidylethanolamine. Specifically binds to phosphatidylinositol 3-phosphate (PI(3)P), phosphatidylinositol 4-phosphate (PI(4)P), phosphatidylinositol 5-phosphate (PI(5)P) and possibly phosphatidylinositol 4,5-bisphosphate (PI(4,5)P2). May be involved in the maintenance of the endoplasmic reticulum and/or Golgi structures. May regulate the transport between Golgi apparatus and plasma membrane. This chain is Triacylglycerol hydrolase DDHD2, found in Mus musculus (Mouse).